Reading from the N-terminus, the 266-residue chain is Lectin 7 (266 aa).

The signal sequence occupies residues 1-27; that stretch reads MAINTSRTQILFITIISFLILAQNVNS. N-linked (GlcNAc...) asparagine glycosylation is found at Asn121, Asn205, and Asn219.

It belongs to the leguminous lectin family.

Functionally, may be involved in arbuscular mycorrhizal (AM) symbiosis with AM fungi. This Medicago truncatula (Barrel medic) protein is Lectin 7.